A 508-amino-acid polypeptide reads, in one-letter code: Protein MGF 505-9R (508 aa).

ANK repeat units lie at residues 54–83, 253–282, and 313–343; these read SINL…NLHY, QVDT…RKTV, and IIKK…KINL.

The protein belongs to the asfivirus MGF 505 family.

Functionally, plays a role in virus cell tropism, and may be required for efficient virus replication in macrophages. This chain is Protein MGF 505-9R, found in Ornithodoros (relapsing fever ticks).